The chain runs to 588 residues: Glutathione/L-cysteine transport system ATP-binding/permease protein CydD (588 aa).

Over 1 to 15 the chain is Cytoplasmic; the sequence is MNKSRQKELTRWLKQ. The next 2 helical transmembrane spans lie at 16–36 and 37–57; these read QSVISQRWLNISRLLGFVSGI and LIIAQAWFMARILQHMIMENI. Positions 20-306 constitute an ABC transmembrane type-1 domain; sequence SQRWLNISRL…APEFFQPLRD (287 aa). Topologically, residues 58 to 136 are cytoplasmic; that stretch reads PREALLLPFT…LEQIDDMHDY (79 aa). Residues 137 to 157 traverse the membrane as a helical segment; sequence YARYLPQMALAVSVPLLIVVA. The Periplasmic portion of the chain corresponds to 158-161; it reads IFPS. A helical membrane pass occupies residues 162–182; it reads NWAAALILLGTAPLIPLFMAL. Residues 183 to 249 lie on the Cytoplasmic side of the membrane; that stretch reads VGMGAADANR…MEVLRLAFLS (67 aa). The chain crosses the membrane as a helical span at residues 250 to 270; that stretch reads SGILEFFTSLSIALVAVYFGF. At 271 to 276 the chain is on the periplasmic side; the sequence is SYLGEL. The helical transmembrane segment at 277–297 threads the bilayer; the sequence is DFGHYDTGVTLAAGFLALILA. The Cytoplasmic segment spans residues 298–573; that stretch reads PEFFQPLRDL…QGRYAELSVA (276 aa). Residues 339 to 572 enclose the ABC transporter domain; sequence EAELASTDPV…EQGRYAELSV (234 aa). ATP is bound at residue 373–380; it reads LPAGQRAV.

It belongs to the ABC transporter superfamily. Cysteine exporter (TC 3.A.1.129.1) family. In terms of assembly, forms a heterodimer with CydC.

It localises to the cell inner membrane. It carries out the reaction L-cysteine(in) + ATP + H2O = L-cysteine(out) + ADP + phosphate + H(+). It catalyses the reaction glutathione(in) + ATP + H2O = glutathione(out) + ADP + phosphate + H(+). ATPase activity is stimulated by various thiol compounds. The presence of heme leads to a further enhancement of thiol-stimulated ATPase activity, although a large excess of heme inhibits activity. Glutathione transport is inhibited by sodium orthovanadate, an inhibitor of ABC-type transport systems, but not by the proton ionophore carbonyl cyanide m-chlorophenylhydrazone (CCCP). In terms of biological role, part of the ABC transporter complex CydDC that exports the reduced low-molecular-weight thiols cysteine and glutathione to the periplasm. Export of these thiol-containing redox-active molecules may be crucial for redox homeostasis in the periplasm, permitting correct assembly of various respiratory complexes and formation of correct disulfide bonds in periplasmic and secreted proteins. CydD contains transmembrane domains (TMD), which form a pore in the inner membrane, and an ATP-binding domain (NBD), which is responsible for energy generation. Required for the assembly of functional cytochrome bd-type quinol oxidases and periplasmic c-type cytochromes. Overexpression of CydDC under anaerobic conditions also results in the formation of a heme biosynthesis-derived pigment, P-574. CydDC binds heme b, but heme is probably not transported by the complex and instead has a role in regulating ATPase activity. Its function is as follows. Conversely, a more recent study suggests an alternative function of CydDC: authors suggest that CydDC does not mediate the export of L-cysteine but rather reduces cytoplasmic L-cystine to L-cysteine. The principle function of CydDC would be to maintain the reduced state of cytoplasmic L-cysteine, thereby providing an important connection between sulfur metabolism, oxidative stress and resistance to antibiotics. The protein is Glutathione/L-cysteine transport system ATP-binding/permease protein CydD of Escherichia coli (strain K12).